The sequence spans 387 residues: Radial spoke protein 14 (387 aa).

ARM repeat units follow at residues 24 to 67 (KALP…ELLS), 69 to 109 (PVNH…LLAA), 111 to 150 (EVGARDLAQHSGLDALAAALEDPSEGVRDEAYGALIEAAR), 154 to 198 (TRRA…TCTQ), 204 to 244 (GILS…ALAT), 245 to 286 (REDA…AITI), 289 to 328 (EGKYAALESPGGLAGLVSVLDPCHEQLCINAMTAVSNVAE), and 330 to 370 (PEAR…QCRF).

The protein belongs to the flagellar radial spoke RSP14 family.

It localises to the cytoplasm. Its subcellular location is the cytoskeleton. The protein resides in the flagellum axoneme. The sequence is that of Radial spoke protein 14 (RSP14) from Chlamydomonas reinhardtii (Chlamydomonas smithii).